We begin with the raw amino-acid sequence, 630 residues long: Pentatricopeptide repeat-containing protein At1g62670, mitochondrial (630 aa).

A mitochondrion-targeting transit peptide spans 1–22 (MRISFAIASTAKRFVHRSLVVR). PPR repeat units follow at residues 44–79 (TSYDYREKLSRNGLSELKLDDAVALFGEMVKSRPFP), 80–114 (SIIEFSKLLSAIAKMNKFDVVISLGEQMQNLGIPH), 115–149 (NHYTYSILINCFCRRSQLPLALAVLGKMMKLGYEP), 150–184 (NIVTLSSLLNGYCHSKRISEAVALVDQMFVTGYQP), 185–219 (NTVTFNTLIHGLFLHNKASEAMALIDRMVAKGCQP), 220–254 (DLVTYGVVVNGLCKRGDTDLAFNLLNKMEQGKLEP), 255–289 (GVLIYNTIIDGLCKYKHMDDALNLFKEMETKGIRP), 290–324 (NVVTYSSLISCLCNYGRWSDASRLLSDMIERKINP), 325–359 (DVFTFSALIDAFVKEGKLVEAEKLYDEMVKRSIDP), 360–394 (SIVTYSSLINGFCMHDRLDEAKQMFEFMVSKHCFP), 395–429 (DVVTYNTLIKGFCKYKRVEEGMEVFREMSQRGLVG), 430–464 (NTVTYNILIQGLFQAGDCDMAQEIFKEMVSDGVPP), 465–499 (NIMTYNTLLDGLCKNGKLEKAMVVFEYLQRSKMEP), 500–534 (TIYTYNIMIEGMCKAGKVEDGWDLFCNLSLKGVKP), 535–569 (DVVAYNTMISGFCRKGSKEEADALFKEMKEDGTLP), and 570–604 (NSGCYNTLIRARLRDGDREASAELIKEMRSCGFAG).

It belongs to the PPR family. P subfamily.

The protein localises to the mitochondrion. This Arabidopsis thaliana (Mouse-ear cress) protein is Pentatricopeptide repeat-containing protein At1g62670, mitochondrial.